Consider the following 58-residue polypeptide: Probable ferredoxin (58 aa).

2 4Fe-4S ferredoxin-type domains span residues 2 to 30 (VAKV…LNDD) and 31 to 58 (GIAT…ITIE). 8 residues coordinate [4Fe-4S] cluster: cysteine 10, cysteine 13, cysteine 16, cysteine 20, cysteine 40, cysteine 43, cysteine 46, and cysteine 50.

The cofactor is [4Fe-4S] cluster.

Functionally, ferredoxins are iron-sulfur proteins that transfer electrons in a wide variety of metabolic reactions. This chain is Probable ferredoxin, found in Methanosarcina thermophila.